A 113-amino-acid chain; its full sequence is Large ribosomal subunit protein uL22 (113 aa).

It belongs to the universal ribosomal protein uL22 family. In terms of assembly, part of the 50S ribosomal subunit.

In terms of biological role, this protein binds specifically to 23S rRNA; its binding is stimulated by other ribosomal proteins, e.g. L4, L17, and L20. It is important during the early stages of 50S assembly. It makes multiple contacts with different domains of the 23S rRNA in the assembled 50S subunit and ribosome. The globular domain of the protein is located near the polypeptide exit tunnel on the outside of the subunit, while an extended beta-hairpin is found that lines the wall of the exit tunnel in the center of the 70S ribosome. The polypeptide is Large ribosomal subunit protein uL22 (Bacillus subtilis (strain 168)).